We begin with the raw amino-acid sequence, 124 residues long: Large ribosomal subunit protein bL17 (124 aa).

The protein belongs to the bacterial ribosomal protein bL17 family. As to quaternary structure, part of the 50S ribosomal subunit. Contacts protein L32.

This is Large ribosomal subunit protein bL17 from Trichlorobacter lovleyi (strain ATCC BAA-1151 / DSM 17278 / SZ) (Geobacter lovleyi).